A 342-amino-acid polypeptide reads, in one-letter code: Uroporphyrinogen decarboxylase (342 aa).

Substrate is bound by residues 24 to 28, aspartate 74, tyrosine 149, serine 204, and histidine 319; that span reads RQAGR.

It belongs to the uroporphyrinogen decarboxylase family. In terms of assembly, homodimer.

The protein localises to the cytoplasm. The enzyme catalyses uroporphyrinogen III + 4 H(+) = coproporphyrinogen III + 4 CO2. Its pathway is porphyrin-containing compound metabolism; protoporphyrin-IX biosynthesis; coproporphyrinogen-III from 5-aminolevulinate: step 4/4. In terms of biological role, catalyzes the decarboxylation of four acetate groups of uroporphyrinogen-III to yield coproporphyrinogen-III. The chain is Uroporphyrinogen decarboxylase from Chelativorans sp. (strain BNC1).